Here is a 384-residue protein sequence, read N- to C-terminus: Anhydro-N-acetylmuramic acid kinase (384 aa).

Glycine 9–aspartate 16 serves as a coordination point for ATP.

Belongs to the anhydro-N-acetylmuramic acid kinase family.

It carries out the reaction 1,6-anhydro-N-acetyl-beta-muramate + ATP + H2O = N-acetyl-D-muramate 6-phosphate + ADP + H(+). It functions in the pathway amino-sugar metabolism; 1,6-anhydro-N-acetylmuramate degradation. The protein operates within cell wall biogenesis; peptidoglycan recycling. Catalyzes the specific phosphorylation of 1,6-anhydro-N-acetylmuramic acid (anhMurNAc) with the simultaneous cleavage of the 1,6-anhydro ring, generating MurNAc-6-P. Is required for the utilization of anhMurNAc either imported from the medium or derived from its own cell wall murein, and thus plays a role in cell wall recycling. This is Anhydro-N-acetylmuramic acid kinase from Synechococcus sp. (strain CC9311).